Consider the following 360-residue polypeptide: Mannonate dehydratase (360 aa).

It belongs to the mannonate dehydratase family. Fe(2+) is required as a cofactor. Requires Mn(2+) as cofactor.

The enzyme catalyses D-mannonate = 2-dehydro-3-deoxy-D-gluconate + H2O. It functions in the pathway carbohydrate metabolism; pentose and glucuronate interconversion. In terms of biological role, catalyzes the dehydration of D-mannonate. The sequence is that of Mannonate dehydratase (uxuA) from Thermotoga neapolitana.